The primary structure comprises 91 residues: MSEERKVVASREYVISLRRAYVVSRTKRAKYAVGLIRRFVARHLKVEPSAVKIGQKLNMELWSRGIEKPPRRVRVSVEKYSDGTALVELKE.

The protein belongs to the eukaryotic ribosomal protein eL31 family.

The protein is Large ribosomal subunit protein eL31 of Pyrobaculum neutrophilum (strain DSM 2338 / JCM 9278 / NBRC 100436 / V24Sta) (Thermoproteus neutrophilus).